Reading from the N-terminus, the 135-residue chain is Histone H2A (135 aa).

Positions 1 to 24 (MTGGGKSGGKASSGKNAQSRSSKA) are disordered. Residues K6 and K10 each carry the N6-acetyllysine modification. Q107 bears the N5-methylglutamine mark. S132 is modified (phosphoserine). The [ST]-Q motif motif lies at 132-133 (SQ).

The protein belongs to the histone H2A family. In terms of assembly, the nucleosome is a histone octamer containing two molecules each of H2A, H2B, H3 and H4 assembled in one H3-H4 heterotetramer and two H2A-H2B heterodimers. The octamer wraps approximately 147 bp of DNA. Phosphorylated to form H2AS128ph (gamma-H2A) in response to DNA double-strand breaks (DSBs) generated by exogenous genotoxic agents and by stalled replication forks. Phosphorylation is dependent on the DNA damage checkpoint kinases MEC1/ATR and TEL1/ATM, spreads on either side of a detected DSB site and may mark the surrounding chromatin for recruitment of proteins required for DNA damage signaling and repair. Gamma-H2A is removed from the DNA prior to the strand invasion-primer extension step of the repair process and subsequently dephosphorylated. Dephosphorylation is necessary for efficient recovery from the DNA damage checkpoint. Post-translationally, acetylated by ESA1 to form H2AK4ac and H2AK7ac.

It is found in the nucleus. The protein localises to the chromosome. Core component of nucleosome which plays a central role in DNA double strand break (DSB) repair. Nucleosomes wrap and compact DNA into chromatin, limiting DNA accessibility to the cellular machineries which require DNA as a template. Histones thereby play a central role in transcription regulation, DNA repair, DNA replication and chromosomal stability. DNA accessibility is regulated via a complex set of post-translational modifications of histones, also called histone code, and nucleosome remodeling. In Podospora anserina (Pleurage anserina), this protein is Histone H2A (HTA1).